The sequence spans 136 residues: ATP synthase epsilon chain (136 aa).

Residues 88-136 form a disordered region; sequence DASSAESDLQAARNEVSKMEGQPASADKVKAQQSLDRARARVQAAKNQD.

It belongs to the ATPase epsilon chain family. F-type ATPases have 2 components, CF(1) - the catalytic core - and CF(0) - the membrane proton channel. CF(1) has five subunits: alpha(3), beta(3), gamma(1), delta(1), epsilon(1). CF(0) has three main subunits: a, b and c.

Its subcellular location is the cellular thylakoid membrane. Produces ATP from ADP in the presence of a proton gradient across the membrane. In Synechococcus sp. (strain WH7803), this protein is ATP synthase epsilon chain.